Here is a 145-residue protein sequence, read N- to C-terminus: D-aminoacyl-tRNA deacylase (145 aa).

Positions 137–138 match the Gly-cisPro motif, important for rejection of L-amino acids motif; sequence GP.

The protein belongs to the DTD family. As to quaternary structure, homodimer.

The protein localises to the cytoplasm. The catalysed reaction is glycyl-tRNA(Ala) + H2O = tRNA(Ala) + glycine + H(+). It carries out the reaction a D-aminoacyl-tRNA + H2O = a tRNA + a D-alpha-amino acid + H(+). An aminoacyl-tRNA editing enzyme that deacylates mischarged D-aminoacyl-tRNAs. Also deacylates mischarged glycyl-tRNA(Ala), protecting cells against glycine mischarging by AlaRS. Acts via tRNA-based rather than protein-based catalysis; rejects L-amino acids rather than detecting D-amino acids in the active site. By recycling D-aminoacyl-tRNA to D-amino acids and free tRNA molecules, this enzyme counteracts the toxicity associated with the formation of D-aminoacyl-tRNA entities in vivo and helps enforce protein L-homochirality. The polypeptide is D-aminoacyl-tRNA deacylase (Salmonella typhimurium (strain LT2 / SGSC1412 / ATCC 700720)).